A 293-amino-acid chain; its full sequence is ATP synthase gamma chain (293 aa).

It belongs to the ATPase gamma chain family. In terms of assembly, F-type ATPases have 2 components, CF(1) - the catalytic core - and CF(0) - the membrane proton channel. CF(1) has five subunits: alpha(3), beta(3), gamma(1), delta(1), epsilon(1). CF(0) has three main subunits: a, b and c.

The protein resides in the cell membrane. Its function is as follows. Produces ATP from ADP in the presence of a proton gradient across the membrane. The gamma chain is believed to be important in regulating ATPase activity and the flow of protons through the CF(0) complex. In Methylacidiphilum infernorum (isolate V4) (Methylokorus infernorum (strain V4)), this protein is ATP synthase gamma chain.